The sequence spans 301 residues: UDP-N-acetylenolpyruvoylglucosamine reductase (301 aa).

Residues 30 to 194 form the FAD-binding PCMH-type domain; it reads VGGEPDYLVF…LSAKFALAPG (165 aa). R173 is an active-site residue. The active-site Proton donor is S223. The active site involves E293.

The protein belongs to the MurB family. FAD serves as cofactor.

The protein localises to the cytoplasm. It catalyses the reaction UDP-N-acetyl-alpha-D-muramate + NADP(+) = UDP-N-acetyl-3-O-(1-carboxyvinyl)-alpha-D-glucosamine + NADPH + H(+). It functions in the pathway cell wall biogenesis; peptidoglycan biosynthesis. In terms of biological role, cell wall formation. The sequence is that of UDP-N-acetylenolpyruvoylglucosamine reductase from Streptococcus pneumoniae (strain CGSP14).